The chain runs to 441 residues: ATP-dependent protease ATPase subunit HslU (441 aa).

Residues isoleucine 18, 60 to 65 (GVGKTE), aspartate 254, glutamate 319, and arginine 391 each bind ATP.

This sequence belongs to the ClpX chaperone family. HslU subfamily. As to quaternary structure, a double ring-shaped homohexamer of HslV is capped on each side by a ring-shaped HslU homohexamer. The assembly of the HslU/HslV complex is dependent on binding of ATP.

The protein resides in the cytoplasm. Its function is as follows. ATPase subunit of a proteasome-like degradation complex; this subunit has chaperone activity. The binding of ATP and its subsequent hydrolysis by HslU are essential for unfolding of protein substrates subsequently hydrolyzed by HslV. HslU recognizes the N-terminal part of its protein substrates and unfolds these before they are guided to HslV for hydrolysis. This chain is ATP-dependent protease ATPase subunit HslU, found in Shewanella loihica (strain ATCC BAA-1088 / PV-4).